The chain runs to 410 residues: MKEELIDRLKRYAEIDTQSDPDSESTPSTEKQRDLLNLLKQELEELGLQTDIDDNGYLFATLESNIANEVPTVGFLAHVDTSHDFNASNVKPQIIENYDGKPIQLGDTDRELNQEVFPAMKSVEGHTLMITDGTSLLGADDKAGVAEIMTALTYLVEHPEVKHGRIRVAFTPDEEIGRGPHKFDVKRFDADFAYTMDGSQYGELQFESFNAAEATITCHGVNVHPGSAKDVMVNAIKLGERFDSMLPEDEVPEKTEGYEGFFHLMNFNGTTEKAQLKYIIRDHDRERFEARKACLLEIRDQINTVYNNDPVEVDMYDQYHNMAEKINEVPEVIEVPKRVFKKLGIEPNTEPIRGGTDGSQLSFMGLPTPNIFTGCDNFHGPFEYASIDVMERAVEVILGIAEEIAQPTDK.

Residues 11 to 30 (RYAEIDTQSDPDSESTPSTE) form a disordered region. His-78 contributes to the Zn(2+) binding site. The active site involves Asp-80. Asp-140 is a Zn(2+) binding site. Glu-174 functions as the Proton acceptor in the catalytic mechanism. Zn(2+)-binding residues include Glu-175, Asp-197, and His-379.

This sequence belongs to the peptidase M20B family. It depends on Zn(2+) as a cofactor.

It localises to the cytoplasm. The enzyme catalyses Release of the N-terminal residue from a tripeptide.. Its function is as follows. Cleaves the N-terminal amino acid of tripeptides. This chain is Peptidase T, found in Staphylococcus carnosus (strain TM300).